Reading from the N-terminus, the 854-residue chain is Protein SEY1 homolog (854 aa).

Over 1 to 724 (MAAFSGETAV…LRNIESGKQS (724 aa)) the chain is Cytoplasmic. The GB1/RHD3-type G domain maps to 49-291 (GVNYHVVGVF…NSNFLFSNCS (243 aa)). A GTP-binding site is contributed by 59–66 (GGQSSGKS). Residues 336–386 (KHAAIEEFKEVCEEYTKKIQRGDVIPQFTRALEETIERLLKNFSDQTKLYK) adopt a coiled-coil conformation. A helical membrane pass occupies residues 725-745 (LPPWVLPVMLLLGWNELYYLL). Residues 746–748 (TSP) are Lumenal-facing. The chain crosses the membrane as a helical span at residues 749-769 (ILLIAIIVIAVLFFKTFLKSQ). Residues 770–854 (LEVLEEKCPV…CRESRDKGED (85 aa)) are Cytoplasmic-facing. Residues 808 to 854 (GGGGAQFRDPTQATSVSGASAGVSSESSSAASPRRRVCRESRDKGED) are disordered. The segment covering 822–839 (SVSGASAGVSSESSSAAS) has biased composition (low complexity). Basic and acidic residues predominate over residues 845–854 (CRESRDKGED).

The protein belongs to the TRAFAC class dynamin-like GTPase superfamily. GB1/RHD3 GTPase family. RHD3 subfamily.

It localises to the endoplasmic reticulum membrane. Functionally, probable GTP-binding protein that may be involved in cell development. In Trypanosoma brucei brucei (strain 927/4 GUTat10.1), this protein is Protein SEY1 homolog.